Reading from the N-terminus, the 310-residue chain is MKGLVIKNTGSWYQVKTDNGQLVECKIKGNFRLKGIRSTNPVAVGDRVQIILNQEGTAFISEIEDRKNYIIRRSSNLSKQSHILAANLDQCMLVVTVNYPETSTTFIDRFLASAEAYRVPVKILFNKVDAYDEDELHYLDSLITLYTQIGYPCFKISALTGEGVDTIREELKGRVTLFSGHSGVGKSTLINALVPGLEVKTAEISAYHNKGMHTTTFSEMFPVPGDGYIIDTPGIKGFGTFDMEEEEIGHYFPEIFKTSANCKYGNCTHRQEPGCAVRKAVEEHYISESRYTSYLSMLEDKEEGKYRAAY.

Positions 77–238 (LSKQSHILAA…IIDTPGIKGF (162 aa)) constitute a CP-type G domain. GTP contacts are provided by residues 126–129 (NKVD) and 180–188 (GHSGVGKST). Residues cysteine 262, cysteine 267, histidine 269, and cysteine 275 each coordinate Zn(2+).

The protein belongs to the TRAFAC class YlqF/YawG GTPase family. RsgA subfamily. As to quaternary structure, monomer. Associates with 30S ribosomal subunit, binds 16S rRNA. It depends on Zn(2+) as a cofactor.

It is found in the cytoplasm. Its function is as follows. One of several proteins that assist in the late maturation steps of the functional core of the 30S ribosomal subunit. Helps release RbfA from mature subunits. May play a role in the assembly of ribosomal proteins into the subunit. Circularly permuted GTPase that catalyzes slow GTP hydrolysis, GTPase activity is stimulated by the 30S ribosomal subunit. This chain is Small ribosomal subunit biogenesis GTPase RsgA, found in Bacteroides fragilis (strain YCH46).